The following is a 181-amino-acid chain: Large ribosomal subunit protein uL5 (181 aa).

Belongs to the universal ribosomal protein uL5 family. In terms of assembly, part of the 50S ribosomal subunit; part of the 5S rRNA/L5/L18/L25 subcomplex. Contacts the 5S rRNA and the P site tRNA. Forms a bridge to the 30S subunit in the 70S ribosome.

This is one of the proteins that bind and probably mediate the attachment of the 5S RNA into the large ribosomal subunit, where it forms part of the central protuberance. In the 70S ribosome it contacts protein S13 of the 30S subunit (bridge B1b), connecting the 2 subunits; this bridge is implicated in subunit movement. Contacts the P site tRNA; the 5S rRNA and some of its associated proteins might help stabilize positioning of ribosome-bound tRNAs. The sequence is that of Large ribosomal subunit protein uL5 from Acaryochloris marina (strain MBIC 11017).